A 316-amino-acid chain; its full sequence is Ribose-phosphate pyrophosphokinase (316 aa).

Residues 39 to 41 and 98 to 99 each bind ATP; these read DGE and RQ. The Mg(2+) site is built by histidine 133 and aspartate 172. The active site involves lysine 195. D-ribose 5-phosphate is bound by residues arginine 197, aspartate 221, and 225–229; that span reads DTGGT.

The protein belongs to the ribose-phosphate pyrophosphokinase family. Class I subfamily. In terms of assembly, homohexamer. Requires Mg(2+) as cofactor.

It is found in the cytoplasm. The enzyme catalyses D-ribose 5-phosphate + ATP = 5-phospho-alpha-D-ribose 1-diphosphate + AMP + H(+). It functions in the pathway metabolic intermediate biosynthesis; 5-phospho-alpha-D-ribose 1-diphosphate biosynthesis; 5-phospho-alpha-D-ribose 1-diphosphate from D-ribose 5-phosphate (route I): step 1/1. Involved in the biosynthesis of the central metabolite phospho-alpha-D-ribosyl-1-pyrophosphate (PRPP) via the transfer of pyrophosphoryl group from ATP to 1-hydroxyl of ribose-5-phosphate (Rib-5-P). The chain is Ribose-phosphate pyrophosphokinase from Ralstonia nicotianae (strain ATCC BAA-1114 / GMI1000) (Ralstonia solanacearum).